Reading from the N-terminus, the 430-residue chain is Probable sugar isomerase mlr5709 (430 aa).

The Mn(2+) site is built by histidine 257, aspartate 289, and aspartate 291.

Belongs to the rhamnose isomerase family. Requires Mn(2+) as cofactor.

The sequence is that of Probable sugar isomerase mlr5709 from Mesorhizobium japonicum (strain LMG 29417 / CECT 9101 / MAFF 303099) (Mesorhizobium loti (strain MAFF 303099)).